Consider the following 223-residue polypeptide: Sigma non-opioid intracellular receptor 1 (223 aa).

At 1-9 (MQWAVGRRW) the chain is on the lumenal side. Residues 2–8 (QWAVGRR) are targeting to endoplasmic reticulum-associated lipid droplets. The helical transmembrane segment at 10–30 (LWVALFLAAVAVLTQIVWLWL) threads the bilayer. The Cytoplasmic portion of the chain corresponds to 31 to 223 (GTQNFVFQRE…LTTYLFGQDP (193 aa)). The segment at 99-106 (SLSEYVLL) is important for ligand-binding. The C-terminal hydrophobic region stretch occupies residues 177-223 (VIPSTLGFALADTVFSTQDFLTLFYTLRVYARALQLELTTYLFGQDP).

The protein belongs to the ERG2 family. As to quaternary structure, homotrimer. Forms a ternary complex with ANK2 and ITPR3. The complex is disrupted by agonists. Interacts with KCNA4. Interacts with KCNA2; cocaine consumption leads to increased interaction. Interacts with RNF112 in an oxidative stress-regulated manner. As to expression, ubiquitously expressed with higher expression in liver, kidney and steroid-producing tissues such as placenta, ovary and adrenal gland.

Its subcellular location is the nucleus inner membrane. The protein localises to the nucleus outer membrane. It is found in the nucleus envelope. It localises to the cytoplasmic vesicle. The protein resides in the endoplasmic reticulum membrane. Its subcellular location is the membrane. The protein localises to the lipid droplet. It is found in the cell junction. It localises to the cell membrane. The protein resides in the cell projection. Its subcellular location is the growth cone. The protein localises to the postsynaptic density membrane. In terms of biological role, functions in lipid transport from the endoplasmic reticulum and is involved in a wide array of cellular functions probably through regulation of the biogenesis of lipid microdomains at the plasma membrane. Involved in the regulation of different receptors it plays a role in BDNF signaling and EGF signaling. Also regulates ion channels like the potassium channel and could modulate neurotransmitter release. Plays a role in calcium signaling through modulation together with ANK2 of the ITP3R-dependent calcium efflux at the endoplasmic reticulum. Plays a role in several other cell functions including proliferation, survival and death. Originally identified for its ability to bind various psychoactive drugs it is involved in learning processes, memory and mood alteration. Necessary for proper mitochondrial axonal transport in motor neurons, in particular the retrograde movement of mitochondria. Plays a role in protecting cells against oxidative stress-induced cell death via its interaction with RNF112. In Cavia porcellus (Guinea pig), this protein is Sigma non-opioid intracellular receptor 1 (SIGMAR1).